We begin with the raw amino-acid sequence, 183 residues long: Holliday junction branch migration complex subunit RuvA (183 aa).

The tract at residues 1 to 63 (MTVGLIGVVE…EDAHLLYGFL (63 aa)) is domain I. A domain II region spans residues 64–141 (EESEKILFER…IQDETKPVHN (78 aa)). Residue Asn141 is a region of interest, flexible linker. Positions 141-183 (NEAFLALESLGFKSAEINPILKKLKPNLSVEEAIKEALQQLRS) are domain III.

Belongs to the RuvA family. Homotetramer. Forms an RuvA(8)-RuvB(12)-Holliday junction (HJ) complex. HJ DNA is sandwiched between 2 RuvA tetramers; dsDNA enters through RuvA and exits via RuvB. An RuvB hexamer assembles on each DNA strand where it exits the tetramer. Each RuvB hexamer is contacted by two RuvA subunits (via domain III) on 2 adjacent RuvB subunits; this complex drives branch migration. In the full resolvosome a probable DNA-RuvA(4)-RuvB(12)-RuvC(2) complex forms which resolves the HJ.

The protein resides in the cytoplasm. Its function is as follows. The RuvA-RuvB-RuvC complex processes Holliday junction (HJ) DNA during genetic recombination and DNA repair, while the RuvA-RuvB complex plays an important role in the rescue of blocked DNA replication forks via replication fork reversal (RFR). RuvA specifically binds to HJ cruciform DNA, conferring on it an open structure. The RuvB hexamer acts as an ATP-dependent pump, pulling dsDNA into and through the RuvAB complex. HJ branch migration allows RuvC to scan DNA until it finds its consensus sequence, where it cleaves and resolves the cruciform DNA. This chain is Holliday junction branch migration complex subunit RuvA, found in Helicobacter acinonychis (strain Sheeba).